A 103-amino-acid polypeptide reads, in one-letter code: Histone H4 (103 aa).

Residues 1-14 are compositionally biased toward gly residues; it reads MSGRGKGGKGLGKG. Residues 1–20 are disordered; that stretch reads MSGRGKGGKGLGKGGAKRHR. Ser2 is subject to N-acetylserine. Position 17 is an N6-acetyllysine (Lys17). The DNA-binding element occupies 17–21; that stretch reads KRHRK. Lys21 is modified (N6-methyllysine).

It belongs to the histone H4 family. As to quaternary structure, the nucleosome is a histone octamer containing two molecules each of H2A, H2B, H3 and H4 assembled in one H3-H4 heterotetramer and two H2A-H2B heterodimers. The octamer wraps approximately 147 bp of DNA.

It localises to the nucleus. The protein localises to the chromosome. Functionally, core component of nucleosome. Nucleosomes wrap and compact DNA into chromatin, limiting DNA accessibility to the cellular machineries which require DNA as a template. Histones thereby play a central role in transcription regulation, DNA repair, DNA replication and chromosomal stability. DNA accessibility is regulated via a complex set of post-translational modifications of histones, also called histone code, and nucleosome remodeling. In Eucalyptus globulus (Tasmanian blue gum), this protein is Histone H4.